Reading from the N-terminus, the 362-residue chain is tRNA-specific 2-thiouridylase MnmA (362 aa).

ATP-binding positions include 13–20 (GLSGGVDS) and methionine 39. Residues 99–101 (NPD) are interaction with target base in tRNA. The active-site Nucleophile is the cysteine 104. Cysteine 104 and cysteine 200 are disulfide-bonded. Glycine 128 serves as a coordination point for ATP. The interaction with tRNA stretch occupies residues 150–152 (KDQ). The active-site Cysteine persulfide intermediate is the cysteine 200.

The protein belongs to the MnmA/TRMU family.

The protein localises to the cytoplasm. It carries out the reaction S-sulfanyl-L-cysteinyl-[protein] + uridine(34) in tRNA + AH2 + ATP = 2-thiouridine(34) in tRNA + L-cysteinyl-[protein] + A + AMP + diphosphate + H(+). Functionally, catalyzes the 2-thiolation of uridine at the wobble position (U34) of tRNA, leading to the formation of s(2)U34. The chain is tRNA-specific 2-thiouridylase MnmA from Coxiella burnetii (strain Dugway 5J108-111).